The sequence spans 564 residues: Centrosomal protein kizuna (564 aa).

The tract at residues 1 to 21 (MSEAGRAAAGPCPEVSPSRSQ) is disordered. Residues 28 to 50 (RCLRDSETRRLELERKLMEYKSS) are a coiled coil. 5 disordered regions span residues 178-201 (QPAA…PTQA), 304-345 (TGPQ…EDEP), 442-465 (ECGD…PNDS), 487-519 (IGNN…RPEF), and 531-564 (AFWG…DFYD). The span at 313–324 (QQAASQDSSSSS) shows a compositional bias: low complexity. Positions 447–463 (SSVQSNESSYSLPSIPN) are enriched in polar residues. Residues 493-519 (EAKESQEMCSERSSSSERSGDLSRPEF) are compositionally biased toward basic and acidic residues.

Belongs to the kizuna family.

It localises to the cytoplasm. Its subcellular location is the cytoskeleton. It is found in the microtubule organizing center. The protein resides in the centrosome. The protein localises to the cilium basal body. Centrosomal protein required for establishing a robust mitotic centrosome architecture that can endure the forces that converge on the centrosomes during spindle formation. Required for stabilizing the expanded pericentriolar material around the centriole. The sequence is that of Centrosomal protein kizuna (KIZ) from Gallus gallus (Chicken).